We begin with the raw amino-acid sequence, 196 residues long: Carnitine operon protein CaiE (196 aa).

Residues 173 to 196 (TQPLRQMEGNRPRLQGTTDVAPKR) are disordered.

This sequence belongs to the transferase hexapeptide repeat family.

It participates in amine and polyamine metabolism; carnitine metabolism. Its function is as follows. Overproduction of CaiE stimulates the activity of CaiB and CaiD. The polypeptide is Carnitine operon protein CaiE (Escherichia coli (strain SMS-3-5 / SECEC)).